Reading from the N-terminus, the 20-residue chain is Venom peptide Ocy8 (20 aa).

Expressed by the venom gland.

Its subcellular location is the secreted. The sequence is that of Venom peptide Ocy8 from Opisthacanthus cayaporum (South American scorpion).